The chain runs to 396 residues: Phosphoglycerate kinase (396 aa).

Substrate contacts are provided by residues 21–23, arginine 36, 59–62, arginine 113, and arginine 146; these read DLN and HLGR. Residues lysine 197, glutamate 319, and 345-348 each bind ATP; that span reads GGDT.

Belongs to the phosphoglycerate kinase family. As to quaternary structure, monomer.

The protein localises to the cytoplasm. The catalysed reaction is (2R)-3-phosphoglycerate + ATP = (2R)-3-phospho-glyceroyl phosphate + ADP. The protein operates within carbohydrate degradation; glycolysis; pyruvate from D-glyceraldehyde 3-phosphate: step 2/5. This chain is Phosphoglycerate kinase, found in Legionella pneumophila (strain Corby).